A 415-amino-acid chain; its full sequence is MDELLEKAKKVREAWDVLRNATTREKNKAIKKIAEKLDERRKEILEANRIDVEKARERGVKESLVDRLALNDKRIDEMIKACETVIGLKDPVGEVIDSWVREDGLRIARVRVPIGPIGIIYESRPNVTVETTILALKSGNTILLRGGSDALNSNKAIVSAIKEALKETEIPESSVEFIENTDRSLVLEMIRLREYLSLVIPRGGYGLISFVRDNATVPVLETGVGNCHIFVDESADLKKAVPVIINAKTQRPGTCNAAEKLLVHEKIAKEFLPVIVEELRKHGVEVRGCEKTREIVPDVVPATEDDWPTEYLDLIIAIKVVKNVDEAIEHIKKYSTGHSESILTENYSNAKKFVSEIDAAAVYVNASTRFTDGGQFGFGAEIGISTQRFHARGPVGLRELTTYKFVVLGNYHVRE.

It belongs to the gamma-glutamyl phosphate reductase family.

The protein localises to the cytoplasm. The catalysed reaction is L-glutamate 5-semialdehyde + phosphate + NADP(+) = L-glutamyl 5-phosphate + NADPH + H(+). It functions in the pathway amino-acid biosynthesis; L-proline biosynthesis; L-glutamate 5-semialdehyde from L-glutamate: step 2/2. In terms of biological role, catalyzes the NADPH-dependent reduction of L-glutamate 5-phosphate into L-glutamate 5-semialdehyde and phosphate. The product spontaneously undergoes cyclization to form 1-pyrroline-5-carboxylate. The protein is Gamma-glutamyl phosphate reductase of Thermotoga sp. (strain RQ2).